Here is a 323-residue protein sequence, read N- to C-terminus: Annexin A3 (323 aa).

Alanine 2 carries the N-acetylalanine modification. 4 Annexin repeats span residues 18–89 (FSPS…ALVT), 90–161 (PPAV…TLAD), 173–245 (HLAK…AIVN), and 249–320 (NTPA…KICG). Threonine 267 bears the Phosphothreonine mark.

Belongs to the annexin family.

Functionally, inhibitor of phospholipase A2, also possesses anti-coagulant properties. Also cleaves the cyclic bond of inositol 1,2-cyclic phosphate to form inositol 1-phosphate. The sequence is that of Annexin A3 (ANXA3) from Homo sapiens (Human).